The primary structure comprises 449 residues: MRLKFGKLIQALSPAQLIALYYFLAVTVAVILLSLPAAHKPGADWTFIDALFTAVSSVSVTGLTVVDTADTFSTIGIFILAFVLQFGGIGIMTLGTFIWLIMGKRIGLKERKLIMVDQNQSQFSGIVNLMKQVLFLILWIEFFGGLILGTYFLTYYDSYQEAYLHGFFASISATTNGGFDITGNSMIPFRHDYFVQFITMLLIIFGAIGFPVLVEVKDFLFSKHRRYPFTLFTKITTITFGSLVLFGAIGIFALEANHAFAGKSWHDILFLSLFQSTATRSGGLATIDISQLSDSTLFFICALMFIGASPSSVGGGIRTTTFALNLLALFHFARGNKAVKVFKRELHPADLMKSLVVTMMAILLVFGATLILTITEKHSLLELLFEVCSAFGTTGLSLGITADLSSVGKCVIMIVMFIGRIGILTFLYLIGRKEIEANYHYPKERVIIG.

Helical transmembrane passes span 17 to 37 (LIALYYFLAVTVAVILLSLPA), 46 to 66 (TFIDALFTAVSSVSVTGLTVV), 75 to 95 (IGIFILAFVLQFGGIGIMTLG), 133 to 153 (VLFLILWIEFFGGLILGTYFL), 194 to 214 (FVQFITMLLIIFGAIGFPVLV), 235 to 255 (ITTITFGSLVLFGAIGIFALE), 297 to 317 (LFFICALMFIGASPSSVGGGI), 355 to 375 (LVVTMMAILLVFGATLILTIT), 380 to 400 (LLELLFEVCSAFGTTGLSLGI), and 411 to 431 (VIMIVMFIGRIGILTFLYLIG).

This sequence belongs to the TrkH potassium transport family. Ktr (TC 2.A.38.4) subfamily. In terms of assembly, homodimer. Part of the KtrCD complex formed by an octameric catalytic ring of KtrC and a membrane associated dimer of KtrD forming a potassium channel.

It localises to the cell membrane. In terms of biological role, integral membrane subunit of the KtrCD potassium uptake transporter. The 2 major potassium transporter complexes KtrAB and KtrCD confer resistance to both suddenly imposed and prolonged osmotic stress. The chain is Ktr system potassium uptake protein D (ktrD) from Bacillus subtilis (strain 168).